A 1173-amino-acid chain; its full sequence is Rac guanine nucleotide exchange factor JJ (1173 aa).

3 disordered regions span residues 1–380 (MSYE…NQTQ), 458–479 (KDQL…LKQM), and 712–765 (DDQN…QQQQ). 2 stretches are compositionally biased toward low complexity: residues 8 to 23 (QQQQ…QQQQ) and 35 to 45 (QQQQHPQPQYP). Residues 50–62 (TAQSNDSQQQHYG) show a composition bias toward polar residues. 2 stretches are compositionally biased toward low complexity: residues 72-82 (TTSTTQQQQQQ) and 98-118 (QYDQ…NYDY). A compositionally biased stretch (polar residues) spans 119–133 (SNTSGNRNSGQYDQY). 3 stretches are compositionally biased toward low complexity: residues 134 to 143 (TTTNTTSANT), 153 to 191 (SPTP…TSTN), and 208 to 219 (SQTQQQHSPTSS). The span at 220 to 239 (YDYSQVTNNTATNYDSYYQQ) shows a compositional bias: polar residues. Low complexity predominate over residues 240–258 (PTTPTSTSSSSSTTTTTTT). Residues 262-277 (SKFEKSQSLKNMDHFI) show a composition bias toward basic and acidic residues. Polar residues predominate over residues 280–295 (TPSNTPSATINSWDYN). Low complexity predominate over residues 296–380 (QQQPQPQQPQ…NTDTYSNQTQ (85 aa)). Residues 470–479 (KKGEEDLKQM) are compositionally biased toward basic and acidic residues. Residues 743-765 (QQPQPQQEQPPQQQQQQQQQQQQ) show a composition bias toward low complexity. In terms of domain architecture, IQ spans 793-822 (RFGDIIRVQRVSRKWLARKKFKDLVKMKLL). The DH domain maps to 833–1016 (NRFKSVNELY…KDINKYINDR (184 aa)). In terms of domain architecture, PH spans 1044 to 1146 (RYFVRESQCN…WLQDLSVELK (103 aa)).

Its function is as follows. GTPase-activating protein. This chain is Rac guanine nucleotide exchange factor JJ (gxcJJ), found in Dictyostelium discoideum (Social amoeba).